The following is a 105-amino-acid chain: DNA-directed RNA polymerase subunit Rpo13 (105 aa).

Composition is skewed to basic and acidic residues over residues 1–10 and 70–80; these read MSEDDSKKEP and FDDVARSYSKA. 2 disordered regions span residues 1–35 and 70–105; these read MSED…GGEF and FDDV…EEEE. Residues 81–97 show a composition bias toward basic residues; that stretch reads DKKKRRVEKKPKKGKVT.

Belongs to the archaeal Rpo13 RNA polymerase subunit family. As to quaternary structure, part of the 13-subunit RNA polymerase.

The protein localises to the cytoplasm. It catalyses the reaction RNA(n) + a ribonucleoside 5'-triphosphate = RNA(n+1) + diphosphate. Its function is as follows. DNA-dependent RNA polymerase catalyzes the transcription of DNA into RNA using the four ribonucleoside triphosphates as substrates. In vitro binds dsDNA but not ssDNA. This Sulfolobus acidocaldarius (strain ATCC 33909 / DSM 639 / JCM 8929 / NBRC 15157 / NCIMB 11770) protein is DNA-directed RNA polymerase subunit Rpo13.